The chain runs to 58 residues: Protein YecU (58 aa).

The protein is Protein YecU of Escherichia coli (strain K12).